The following is a 903-amino-acid chain: Pentatricopeptide repeat-containing protein At3g02330, mitochondrial (903 aa).

Residues 1–31 constitute a mitochondrion transit peptide; sequence MAESLRLLHMTRSVVSFNRCLTEKISYRRVP. 20 PPR repeats span residues 47–81, 82–112, 113–143, 144–178, 179–213, 214–244, 245–279, 280–314, 346–380, 381–415, 416–446, 447–481, 482–515, 516–550, 567–601, 602–636, 637–667, 668–702, 703–738, and 739–769; these read STTN…GFRP, TTFV…MPLR, DVVS…MPVR, DVVS…GIEF, DGRT…GCDT, DVVA…IPEK, NSVS…NAGV, SQSI…DFAA, NRQS…GLGF, DEIS…SLSL, DVCV…MRRR, DAVS…RIEP, DEFT…GMAS, NSSV…ANVS, MCVS…GITP, DKFT…ELQS, DVYI…SLRR, DFVT…NIKP, NHVT…GLDP, and QLPH…MPFE. The tract at residues 774 to 850 is type E motif; sequence IWRTLLGVCT…EPGCSWVELK (77 aa). Residues 851-881 form a type E(+) motif region; that stretch reads DELHVFLVGDKAHPRWEEIYEELGLIYSEMK.

The protein belongs to the PPR family. PCMP-E subfamily. As to quaternary structure, interacts with MORF1/RIP8.

It localises to the mitochondrion. Its function is as follows. Involved in C-to-U editing of mitochondrial RNA. Required for RNA editing at 8 sites in 6 different mRNAs in mitochondria. The chain is Pentatricopeptide repeat-containing protein At3g02330, mitochondrial (PCMP-E90) from Arabidopsis thaliana (Mouse-ear cress).